Reading from the N-terminus, the 345-residue chain is N-glycosylase/DNA lyase (345 aa).

Residues Asn-149, Arg-154, and Arg-204 each coordinate DNA. The active-site Schiff-base intermediate with DNA is Lys-249. Residues Pro-266 and Asp-268 each contribute to the 8-oxoguanine site. DNA is bound by residues His-270 and Gln-287. Gln-315 and Phe-319 together coordinate 8-oxoguanine.

It belongs to the type-1 OGG1 family. As to expression, highest expression in testis.

Its subcellular location is the nucleus. It is found in the nucleoplasm. It localises to the nucleus speckle. The protein resides in the nucleus matrix. It catalyses the reaction 2'-deoxyribonucleotide-(2'-deoxyribose 5'-phosphate)-2'-deoxyribonucleotide-DNA = a 3'-end 2'-deoxyribonucleotide-(2,3-dehydro-2,3-deoxyribose 5'-phosphate)-DNA + a 5'-end 5'-phospho-2'-deoxyribonucleoside-DNA + H(+). Functionally, DNA repair enzyme that incises DNA at 8-oxoG residues. Excises 7,8-dihydro-8-oxoguanine and 2,6-diamino-4-hydroxy-5-N-methylformamidopyrimidine (FAPY) from damaged DNA. Has a beta-lyase activity that nicks DNA 3' to the lesion. This is N-glycosylase/DNA lyase (Ogg1) from Mus musculus (Mouse).